The chain runs to 251 residues: Geranylgeranylglyceryl phosphate synthase (251 aa).

Residues D25 and S54 each contribute to the Mg(2+) site. Sn-glycerol 1-phosphate is bound by residues 173 to 179 (YLEAGSG), 204 to 205 (GG), and 226 to 227 (GT).

This sequence belongs to the GGGP/HepGP synthase family. Group II subfamily. Mg(2+) serves as cofactor.

It is found in the cytoplasm. It catalyses the reaction sn-glycerol 1-phosphate + (2E,6E,10E)-geranylgeranyl diphosphate = sn-3-O-(geranylgeranyl)glycerol 1-phosphate + diphosphate. Its pathway is membrane lipid metabolism; glycerophospholipid metabolism. Its function is as follows. Prenyltransferase that catalyzes the transfer of the geranylgeranyl moiety of geranylgeranyl diphosphate (GGPP) to the C3 hydroxyl of sn-glycerol-1-phosphate (G1P). This reaction is the first ether-bond-formation step in the biosynthesis of archaeal membrane lipids. The chain is Geranylgeranylglyceryl phosphate synthase from Pyrococcus furiosus (strain ATCC 43587 / DSM 3638 / JCM 8422 / Vc1).